Reading from the N-terminus, the 469-residue chain is E3 ubiquitin-protein ligase TRAIP (469 aa).

An RING-type zinc finger spans residues 7 to 50 (CTICSDFFDHSRDVAAIHCGHTFHLQCLIQWFETAPSRTCPQCR). Coiled coils occupy residues 70–177 (EENV…QSQR) and 201–280 (CVSL…TLNL). Residues 211–469 (LKEARKASGE…QAKLDTFLWS (259 aa)) are interaction with CYLD. Residue K304 forms a Glycyl lysine isopeptide (Lys-Gly) (interchain with G-Cter in SUMO2) linkage. A PIP-box motif is present at residues 460-469 (QAKLDTFLWS).

Belongs to the TRAIP family. In terms of assembly, interacts (via PIP-box) with PCNA. Binds TRAF1, TRAF2, TRAF3, TRAF5 and TRAF6 is part of the receptor-TRAF signaling complex. May interact with CYLD; the C-terminus interacts with CYLD, however the interaction was not detected with the full-length protein. Interacts with POLK and POLN. Interacts with UIMC1. Post-translationally, sumoylated; sumoylation is required for nuclear localization. Sumoylation increases protein stability, possibly by preventing ubiquitination. In terms of processing, autoubiquitinated.

The protein localises to the nucleus. It is found in the nucleoplasm. The protein resides in the nucleolus. It localises to the chromosome. Its subcellular location is the cytoplasm. The protein localises to the perinuclear region. The catalysed reaction is S-ubiquitinyl-[E2 ubiquitin-conjugating enzyme]-L-cysteine + [acceptor protein]-L-lysine = [E2 ubiquitin-conjugating enzyme]-L-cysteine + N(6)-ubiquitinyl-[acceptor protein]-L-lysine.. Its pathway is protein modification; protein ubiquitination. E3 ubiquitin ligase required to protect genome stability in response to replication stress. Acts as a key regulator of interstrand cross-link repair, which takes place when both strands of duplex DNA are covalently tethered together, thereby blocking replication and transcription. Controls the choice between the two pathways of replication-coupled interstrand-cross-link repair by mediating ubiquitination of MCM7 subunit of the CMG helicase complex. Short ubiquitin chains on MCM7 promote recruitment of DNA glycosylase NEIL3. If the interstrand cross-link cannot be cleaved by NEIL3, the ubiquitin chains continue to grow on MCM7, promoting the unloading of the CMG helicase complex by the VCP/p97 ATPase, enabling the Fanconi anemia DNA repair pathway. Only catalyzes ubiquitination of MCM7 when forks converge. Also involved in the repair of covalent DNA-protein cross-links (DPCs) during DNA synthesis: promotes ubiquitination of DPCs, leading to their degradation by the proteasome. Has also been proposed to play a role in promoting translesion synthesis by mediating the assembly of 'Lys-63'-linked poly-ubiquitin chains on the Y-family polymerase POLN in order to facilitate bypass of DNA lesions and preserve genomic integrity. The function in translesion synthesis is however controversial. Acts as a regulator of the spindle assembly checkpoint. Also acts as a negative regulator of innate immune signaling by inhibiting activation of NF-kappa-B mediated by TNF. Negatively regulates TLR3/4- and RIG-I-mediated IRF3 activation and subsequent IFNB1 production and cellular antiviral response by promoting 'Lys-48'-linked polyubiquitination of TNK1 leading to its proteasomal degradation. In Homo sapiens (Human), this protein is E3 ubiquitin-protein ligase TRAIP.